The sequence spans 256 residues: Triosephosphate isomerase (256 aa).

A substrate-binding site is contributed by 9 to 11 (NWK). Residue histidine 97 is the Electrophile of the active site. The Proton acceptor role is filled by glutamate 169. Substrate-binding positions include glycine 175, serine 214, and 235–236 (GG).

This sequence belongs to the triosephosphate isomerase family. Homodimer.

It is found in the cytoplasm. The enzyme catalyses D-glyceraldehyde 3-phosphate = dihydroxyacetone phosphate. The protein operates within carbohydrate biosynthesis; gluconeogenesis. It functions in the pathway carbohydrate degradation; glycolysis; D-glyceraldehyde 3-phosphate from glycerone phosphate: step 1/1. Its function is as follows. Involved in the gluconeogenesis. Catalyzes stereospecifically the conversion of dihydroxyacetone phosphate (DHAP) to D-glyceraldehyde-3-phosphate (G3P). The sequence is that of Triosephosphate isomerase from Vibrio vulnificus (strain CMCP6).